The chain runs to 88 residues: Small ribosomal subunit protein bS16 (88 aa).

This sequence belongs to the bacterial ribosomal protein bS16 family.

The sequence is that of Small ribosomal subunit protein bS16 from Symbiobacterium thermophilum (strain DSM 24528 / JCM 14929 / IAM 14863 / T).